Here is a 327-residue protein sequence, read N- to C-terminus: MTHSLRVIFAGTPEFAAAALAAIHEAGFPVPLVLTQPDRPAGRGMKLQASAVKRYAFERGMAVAQPPSLRRAGKYPAEAVAALDLLHATPHDVMVVAAYGLLLPQEVLELPRHGCINIHASLLPRWRGAAPIHRAIEAGDAETGVTLMQMDAGLDTGAMLHEARVAIAPDDTTATLHDKLAAAGARLIVDALVELERTGALAATPQPADGVTYAEKIGKHEAALDWRKPAAALARQVRAFDPFPGGAGTLDGATLKLWAADAVPGRDDAAPGTIVDIGPDGVVIACGEGALRVTQLQKPGGKRLPAREFLAGAPLAVGQRFAPADAA.

Residue 121–124 (SLLP) coordinates (6S)-5,6,7,8-tetrahydrofolate.

The protein belongs to the Fmt family.

The catalysed reaction is L-methionyl-tRNA(fMet) + (6R)-10-formyltetrahydrofolate = N-formyl-L-methionyl-tRNA(fMet) + (6S)-5,6,7,8-tetrahydrofolate + H(+). Attaches a formyl group to the free amino group of methionyl-tRNA(fMet). The formyl group appears to play a dual role in the initiator identity of N-formylmethionyl-tRNA by promoting its recognition by IF2 and preventing the misappropriation of this tRNA by the elongation apparatus. This chain is Methionyl-tRNA formyltransferase, found in Burkholderia mallei (strain ATCC 23344).